The chain runs to 339 residues: Deubiquitinase and deneddylase Dub2 (339 aa).

The chain crosses the membrane as a helical span at residues 36-56 (IIIALFLIVISCGLILCAYTF). Active-site residues include histidine 203, aspartate 220, and cysteine 282.

This sequence belongs to the peptidase C48 family.

The protein localises to the secreted. Its subcellular location is the host cell. The protein resides in the membrane. Functionally, effector proteins function to alter host cell physiology and promote bacterial survival in host tissues. This protease possesses deubiquitinating and deneddylating activities. In Chlamydia trachomatis serovar D (strain ATCC VR-885 / DSM 19411 / UW-3/Cx), this protein is Deubiquitinase and deneddylase Dub2 (cdu2).